Here is a 638-residue protein sequence, read N- to C-terminus: Stress-activated protein kinase alpha (638 aa).

ANK repeat units lie at residues 43–72 (YGQS…TLKA), 80–109 (NGFS…NVDV), 113–146 (DLNT…NVNA), 150–181 (NGET…NVNL), 185–214 (FQES…DVDC), and 219–248 (ERKT…LFDW). The SAM domain maps to 240 to 303 (KKYKDLFDWL…LKETSNLANE (64 aa)). The Protein kinase domain maps to 351–620 (LEYTEKLGAG…RLVTIENEYR (270 aa)). Residues 357–365 (LGAGSSGKV) and K378 contribute to the ATP site. The Proton acceptor role is filled by D472.

Belongs to the protein kinase superfamily. TKL Ser/Thr protein kinase family. Interacts with F-actin. Post-translationally, autophosphorylated.

The protein localises to the cytoplasm. The protein resides in the cytoskeleton. The enzyme catalyses L-seryl-[protein] + ATP = O-phospho-L-seryl-[protein] + ADP + H(+). It carries out the reaction L-threonyl-[protein] + ATP = O-phospho-L-threonyl-[protein] + ADP + H(+). Its function is as follows. May be involved in cortical F-actin organization and resistance to osmotic stress. Activated upon cell detachment, in vitro. The polypeptide is Stress-activated protein kinase alpha (spkA-1) (Dictyostelium discoideum (Social amoeba)).